The primary structure comprises 446 residues: Probable glycine dehydrogenase (decarboxylating) subunit 1 (446 aa).

It belongs to the GcvP family. N-terminal subunit subfamily. The glycine cleavage system is composed of four proteins: P, T, L and H. In this organism, the P 'protein' is a heterodimer of two subunits.

It carries out the reaction N(6)-[(R)-lipoyl]-L-lysyl-[glycine-cleavage complex H protein] + glycine + H(+) = N(6)-[(R)-S(8)-aminomethyldihydrolipoyl]-L-lysyl-[glycine-cleavage complex H protein] + CO2. Its function is as follows. The glycine cleavage system catalyzes the degradation of glycine. The P protein binds the alpha-amino group of glycine through its pyridoxal phosphate cofactor; CO(2) is released and the remaining methylamine moiety is then transferred to the lipoamide cofactor of the H protein. The sequence is that of Probable glycine dehydrogenase (decarboxylating) subunit 1 from Coxiella burnetii (strain CbuK_Q154) (Coxiella burnetii (strain Q154)).